A 984-amino-acid chain; its full sequence is Glutamate [NMDA] receptor subunit 1 (984 aa).

The signal sequence occupies residues 1–24 (MAAAFAYRWLLCAAGIVNVLPIGA). The Extracellular portion of the chain corresponds to 25–570 (QRHTASDNPS…TLVSFLQPFS (546 aa)). Residues asparagine 255, asparagine 311, asparagine 342, asparagine 394, asparagine 451, asparagine 478, and asparagine 498 are each glycosylated (N-linked (GlcNAc...) asparagine). Glycine contacts are provided by residues 527–529 (PLT) and arginine 534. A helical membrane pass occupies residues 571-591 (NTLWILVMVSVHVVALVLYLL). Residues 592 to 648 (DRFSPFGRFKLSHSDSNEEKALNLSSAVWFAWGVLLNSGIGEGTPRSFSARVLGMVW) are Cytoplasmic-facing. Residues 649 to 669 (AGFAMIIVASYTANLAAFLVL) traverse the membrane as a helical segment. Over 670–828 (ERPKTKLSGI…KTPNTLGLKN (159 aa)) the chain is Extracellular. An N-linked (GlcNAc...) asparagine glycan is attached at asparagine 690. Glycine is bound by residues serine 700 and aspartate 744. Residues 829 to 849 (MAGVFILVGVGIAGGVGLIII) form a helical membrane-spanning segment. Over 850-984 (EVIYKKHQVK…YTSDVSHLVV (135 aa)) the chain is Cytoplasmic. The interval 947–984 (KSGLVPPALGLGKTRPQQNPLPPRYSPGYTSDVSHLVV) is disordered. The span at 974–984 (GYTSDVSHLVV) shows a compositional bias: polar residues.

Belongs to the glutamate-gated ion channel (TC 1.A.10.1) family. As to quaternary structure, forms a heteromeric NMDA channel with Nmdar2.

The protein resides in the cell membrane. It localises to the postsynaptic cell membrane. The protein localises to the postsynaptic density. In terms of biological role, NMDA receptor subtype of glutamate-gated ion channels with high calcium permeability and voltage-dependent sensitivity to magnesium. Mediated by glycine. This protein plays a key role in synaptic plasticity, synaptogenesis, excitotoxicity, memory acquisition and learning. It mediates neuronal functions in glutamate neurotransmission. Is involved in the cell surface targeting of NMDA receptors. Plays a role in associative learning and in long-term memory consolidation. This Drosophila virilis (Fruit fly) protein is Glutamate [NMDA] receptor subunit 1.